The following is a 181-amino-acid chain: Inner membrane-spanning protein YciB (181 aa).

Helical transmembrane passes span 10-30 (LIIF…GALI), 50-70 (MHLI…VFHD), 72-92 (AFIK…LGVS), 118-138 (VTWY…YVAF), and 148-168 (FKVF…VFYL).

This sequence belongs to the YciB family.

The protein resides in the cell inner membrane. Its function is as follows. Plays a role in cell envelope biogenesis, maintenance of cell envelope integrity and membrane homeostasis. The chain is Inner membrane-spanning protein YciB from Shewanella sp. (strain MR-4).